We begin with the raw amino-acid sequence, 322 residues long: Beta-ketoacyl-[acyl-carrier-protein] synthase III (322 aa).

Residues Cys112 and His249 contribute to the active site. The ACP-binding stretch occupies residues Gln250–Arg254. Asn279 is an active-site residue.

This sequence belongs to the thiolase-like superfamily. FabH family. Homodimer.

The protein localises to the cytoplasm. The catalysed reaction is malonyl-[ACP] + acetyl-CoA + H(+) = 3-oxobutanoyl-[ACP] + CO2 + CoA. It functions in the pathway lipid metabolism; fatty acid biosynthesis. Its function is as follows. Catalyzes the condensation reaction of fatty acid synthesis by the addition to an acyl acceptor of two carbons from malonyl-ACP. Catalyzes the first condensation reaction which initiates fatty acid synthesis and may therefore play a role in governing the total rate of fatty acid production. Possesses both acetoacetyl-ACP synthase and acetyl transacylase activities. Its substrate specificity determines the biosynthesis of branched-chain and/or straight-chain of fatty acids. The chain is Beta-ketoacyl-[acyl-carrier-protein] synthase III from Caulobacter vibrioides (strain ATCC 19089 / CIP 103742 / CB 15) (Caulobacter crescentus).